The sequence spans 302 residues: Phosphatidylglycerol--prolipoprotein diacylglyceryl transferase (302 aa).

A run of 7 helical transmembrane segments spans residues 19-39 (FGPL…LLGW), 67-87 (LVLW…FVFY), 108-128 (IWEG…AIIL), 143-163 (LIAP…FING), 203-223 (QLYE…FAIY), 232-252 (GALV…LENV), and 264-284 (LGLT…GWLL). Arg-156 is an a 1,2-diacyl-sn-glycero-3-phospho-(1'-sn-glycerol) binding site.

It belongs to the Lgt family.

Its subcellular location is the cell inner membrane. The catalysed reaction is L-cysteinyl-[prolipoprotein] + a 1,2-diacyl-sn-glycero-3-phospho-(1'-sn-glycerol) = an S-1,2-diacyl-sn-glyceryl-L-cysteinyl-[prolipoprotein] + sn-glycerol 1-phosphate + H(+). It participates in protein modification; lipoprotein biosynthesis (diacylglyceryl transfer). Functionally, catalyzes the transfer of the diacylglyceryl group from phosphatidylglycerol to the sulfhydryl group of the N-terminal cysteine of a prolipoprotein, the first step in the formation of mature lipoproteins. This is Phosphatidylglycerol--prolipoprotein diacylglyceryl transferase from Caulobacter vibrioides (strain ATCC 19089 / CIP 103742 / CB 15) (Caulobacter crescentus).